We begin with the raw amino-acid sequence, 70 residues long: uncharacterized protein (70 aa).

The next 2 membrane-spanning stretches (helical) occupy residues 19-39 (VIAL…VVGL) and 40-60 (LFKL…VRKF).

It is found in the cell membrane. This is an uncharacterized protein from Streptomyces coelicolor (strain ATCC BAA-471 / A3(2) / M145).